The chain runs to 1057 residues: Carbamoyl phosphate synthase large chain (1057 aa).

The tract at residues 1-401 is carboxyphosphate synthetic domain; the sequence is MPKRDDIQTI…SLLKAIRSLE (401 aa). Arg-129, Arg-169, Gly-175, Gly-176, Lys-208, Ile-210, Glu-215, Gly-241, Ile-242, His-243, Gln-284, and Glu-298 together coordinate ATP. Residues 133-327 form the ATP-grasp 1 domain; it reads RSLMNDLNVP…IAKLAAKIAV (195 aa). 3 residues coordinate Mg(2+): Gln-284, Glu-298, and Asn-300. Gln-284, Glu-298, and Asn-300 together coordinate Mn(2+). Residues 402–546 are oligomerization domain; it reads YGVHHLGLPN…YGTYETENES (145 aa). Residues 547–929 form a carbamoyl phosphate synthetic domain region; it reads IVTDKEKILV…ALYKGLTGSG (383 aa). The ATP-grasp 2 domain maps to 671–861; it reads EALLHTIDVP…MAQLAMQAIM (191 aa). The ATP site is built by Arg-707, Arg-746, Leu-748, Glu-752, Gly-777, Val-778, His-779, Ser-780, Gln-820, and Glu-832. Residues Gln-820, Glu-832, and Asn-834 each contribute to the Mg(2+) site. Mn(2+) contacts are provided by Gln-820, Glu-832, and Asn-834. The region spanning 930–1057 is the MGS-like domain; that stretch reads VEVKDHGTVL…ESMTFSMRTM (128 aa). An allosteric domain region spans residues 930–1057; that stretch reads VEVKDHGTVL…ESMTFSMRTM (128 aa).

This sequence belongs to the CarB family. Composed of two chains; the small (or glutamine) chain promotes the hydrolysis of glutamine to ammonia, which is used by the large (or ammonia) chain to synthesize carbamoyl phosphate. Tetramer of heterodimers (alpha,beta)4. Mg(2+) is required as a cofactor. The cofactor is Mn(2+).

The catalysed reaction is hydrogencarbonate + L-glutamine + 2 ATP + H2O = carbamoyl phosphate + L-glutamate + 2 ADP + phosphate + 2 H(+). It catalyses the reaction hydrogencarbonate + NH4(+) + 2 ATP = carbamoyl phosphate + 2 ADP + phosphate + 2 H(+). It functions in the pathway amino-acid biosynthesis; L-arginine biosynthesis; carbamoyl phosphate from bicarbonate: step 1/1. Its pathway is pyrimidine metabolism; UMP biosynthesis via de novo pathway; (S)-dihydroorotate from bicarbonate: step 1/3. In terms of biological role, large subunit of the glutamine-dependent carbamoyl phosphate synthetase (CPSase). CPSase catalyzes the formation of carbamoyl phosphate from the ammonia moiety of glutamine, carbonate, and phosphate donated by ATP, constituting the first step of 2 biosynthetic pathways, one leading to arginine and/or urea and the other to pyrimidine nucleotides. The large subunit (synthetase) binds the substrates ammonia (free or transferred from glutamine from the small subunit), hydrogencarbonate and ATP and carries out an ATP-coupled ligase reaction, activating hydrogencarbonate by forming carboxy phosphate which reacts with ammonia to form carbamoyl phosphate. The sequence is that of Carbamoyl phosphate synthase large chain from Staphylococcus haemolyticus (strain JCSC1435).